A 340-amino-acid polypeptide reads, in one-letter code: MKKTLIALSVSAAAVATGVNAAELYNQDGTSLDMGGRAEARLSMKDGKVADNSRIRLNFLGKVEIQDGLYGVGFYEGEFTTADNADGSDLDNRYTYAGLGGKFGEVTYGKNDGALGVITDFTDIMAYHGNSAADKIAVADRVDNMMSYKGQFDALSVKASYRFADRADSSKNNVDNTYIDNGKDGYSLSAIYAIGQTGLTLGGGYADQDKSNEYMLAASYTMGDLYFAGVFTDGEKDYGTNGDYSHRGFSSVEDYTGYELAAKYTMGQTVFTTTYNNAETDGYTSTDNFAVDATYYFKPNFRGYVSYNFNLLDAGDKIGTSTISKADAEDELALGLRYDF.

Positions 1-21 (MKKTLIALSVSAAAVATGVNA) are cleaved as a signal peptide.

The protein belongs to the Gram-negative porin family. In terms of assembly, homotrimer.

The protein localises to the cell outer membrane. Forms pores that allow passive diffusion of small molecules across the outer membrane. The polypeptide is Outer membrane protein U (ompU) (Vibrio vulnificus (strain CMCP6)).